We begin with the raw amino-acid sequence, 140 residues long: Large ribosomal subunit protein bL17 (140 aa).

Belongs to the bacterial ribosomal protein bL17 family. As to quaternary structure, part of the 50S ribosomal subunit. Contacts protein L32.

This is Large ribosomal subunit protein bL17 from Paramagnetospirillum magneticum (strain ATCC 700264 / AMB-1) (Magnetospirillum magneticum).